Reading from the N-terminus, the 2314-residue chain is MKGHQFQSWIFELREILREVKNSHYFLDSWTQFDSVGSFTHIFFHQERFMKLFDPRIWSILLSRDSQGSTSNRYFTVKGVVLLVVAVLIYRINNRNIVERKNLYLRGLLPIPILPIPMNSIGPRNDTLEESFWSSNINRLIVSLLYLPKGKKISESCFMDSKESAWVLPITKKKCIIPESNWGSRWWRNRIGKKRDSSCKISNETETIAGIEISFKEKDIQYLKFLFVSYTDDPIRKDHDWELFDRLSPRKKRNIINLNSGQLFEILVKHLICYLMSAFREKRPIEMGGFFKQQGGAGATIQSNDIEHVSHLFSRKKWGIFLQNCAQFHMWQFYQDLFVSWGKNQHESDFLRNVSRDNWIWLDNVWLVNKDRFFSKVLNVSSNIQYDSTRSIFVQVTDSSQLKGSSDQSGDHFDSIRNENSEYHTLINQTEIQQLKERSILWDPSFLQTERTEIESDRFPKCLSGYSSISRLFTEREKQMNNHLLPEEIEEFLGNPTRSIRSFFSDRWSELRLGSNPTERSTRDQKLLKKQQDVSFVPSRRSENKEMVAIFKIITYLQNTVSIHPISSDPGCDMVPKDEPDIDSSHKISFLNKNPFLDLFHLFHDRNKGGYTLHHDFESEERFQEMADLFTLSITEAGLVYHKGFTFSIDSYGLDQKKFLNEVFNSRDESKKKSLWFLPPIFDEENESFYGRIRKKSARISCGNDLEDPNPKIVVFSSNNIMGAVNQYRLIRNLIQIQYRTYEYIRNVSNRFFLMNRPDRNFEYGIQGDPIGNDTLNHLTIIKHTINQHLSNLKKSQKKWFDPLISRTERCMNRDPDAYRYKWSNGSKNFQEHLEHFVSEQKHRFQVVFGRLRINQYSIDWSEVIDKQDLSKSLRFFLSKSLLFLSKSLRFFLSKSLPFFFVSIGNIPIHRFEIHIYELKGPNDQLCNPLLESIGVQIVHLNKLKPFLLDDHDISQRSKFLINGGTISPFLFNKIPKWMIDSFHTRKNRRKSFDNTDSYFSMISHDRDNWLNPVKPFHRSSSISSFYKANRLRFLNNPHHLWFYCNKRFPFDVEKARINNYDLTYGQFLNVLFIRNKIFSLCVRKKKHVFGGRDAISPIESQVSDIFIPNDFPQSGDETYNLYKSFHFPIRSDSFVRRAIYSIADISGTPLTEEQIVHFQRTYCQPLSDMNLSDSEGKNLHQYLRFNSNMGLIHTLCSEKDFPSGKRKKRTLCLKKCVEKWQMYRTFQRDNDFSNLSKWNLFQTYMPWFLTSTGCKYLNFTLLDTFSDPLPILSNSPKFVSIFHDIMHGSDISWPIPQQKGRAILPQRNWISEMSSKCLQNLLLYEEIIHRNNESPALLIWTHLRSPNARELLYSILFLLLVAGYLVRTHLLFVSRASSELQTELEKIKSLMIPSYMMELRKLLDRYPTPELNSFWLKNLFLVALEQLGDSLEEIRGSASGGNILLGGGPAYGVKSIRSKKKYLNINLIDIIDFISIIPNPINRITFSRNTRHLSHTSKEIYSLIRKRKKNVNGGWIDEKIESWVANSDSIDDEEREFLVQFSTLTTEKRIDQILLSLTHSDHLSKNDSGYQMIEQPGSIYLRYLVDIHKKYLMNYEFNRSCLAERRIFLAHYQTITYSQTSCGTNSSHFPSHGKPFSLRLALSPSRGILVIGSIGTGRSYLVKYLATNSYVPFITVFPNKFLDDKPKGSLFDNIDIDDSDDIDIDDSDDIDIDDSDNIDDLDTELLTMTNVLTMYMTPKIDRFDITLQFELAKAMSPCIIWIPNIHDLYVNESNYLSLGLLVNYLSRDCERCSTRNILLIASTHIPQKVDPALIAPNKLNTCIKIRRLLIPQQRKHFFILSYTRGFHLEKKMFHTNVFGSITMGSNARDLVALTNEALSISITQKKSIIDTNTIRSAIHRQTWDLRSQVRWVQDHGILFYQIGRAVAQNVLLSDCPIDPISIYMKKKSCKEGDSYLYKWYFELGTSMKKLTILLYLLSCSAGSVAQDLWSPPGPDERNCITSYGFVENDSDLVHGLLEVEGALVGSSRTEKDCSQFDNDRVILLLRSEPKNPFDMIQNGSCSIVDQRFLYEKYESELEEGEGEGALDPQQIEEDLFNHIVWAPRIWRPCGNLFDCIERPNELGFPYWWTRSFRGKRILYHKEDALQENDSEFLQSGTVRYQRLDRSSKEQGFFRISQFIWDPADPFFFLFKDQPFVFSRREFFADEEMSKGLITSQTNPTTSIYKRWFIKNTQQNHFELLIHRQRWLRTNSLLSNGSFRSNTLSESYQYLSNLFLSNRTLLDQMTKALLRKRWLFPDEMKHWIHVTGERFPIP.

1653-1660 (GSIGTGRS) provides a ligand contact to ATP.

It belongs to the Ycf2 family.

It is found in the plastid. Its subcellular location is the chloroplast stroma. Its function is as follows. Probable ATPase of unknown function. Its presence in a non-photosynthetic plant (Epifagus virginiana) and experiments in tobacco indicate that it has an essential function which is probably not related to photosynthesis. This is Protein Ycf2 from Piper cenocladum (Ant piper).